A 224-amino-acid chain; its full sequence is Octanoyltransferase (224 aa).

In terms of domain architecture, BPL/LPL catalytic spans 33-213 (GTTAETMLLL…ALQAEFGREA (181 aa)). Residues 51-71 (GKRTTDDERPTDGTPVVDVDR) are disordered. Residues 71–78 (RGGKITWH), 143–145 (AIG), and 156–158 (GFA) each bind substrate. C174 serves as the catalytic Acyl-thioester intermediate.

Belongs to the LipB family.

It localises to the cytoplasm. The catalysed reaction is octanoyl-[ACP] + L-lysyl-[protein] = N(6)-octanoyl-L-lysyl-[protein] + holo-[ACP] + H(+). Its pathway is protein modification; protein lipoylation via endogenous pathway; protein N(6)-(lipoyl)lysine from octanoyl-[acyl-carrier-protein]: step 1/2. In terms of biological role, catalyzes the transfer of endogenously produced octanoic acid from octanoyl-acyl-carrier-protein onto the lipoyl domains of lipoate-dependent enzymes. Lipoyl-ACP can also act as a substrate although octanoyl-ACP is likely to be the physiological substrate. This is Octanoyltransferase from Leifsonia xyli subsp. xyli (strain CTCB07).